Consider the following 78-residue polypeptide: Small ribosomal subunit protein bS16c (78 aa).

The protein belongs to the bacterial ribosomal protein bS16 family.

The protein resides in the plastid. It is found in the chloroplast. The chain is Small ribosomal subunit protein bS16c from Gracilaria tenuistipitata var. liui (Red alga).